The chain runs to 549 residues: Glucose-6-phosphate isomerase (549 aa).

The active-site Proton donor is the E353. Residues H384 and K513 contribute to the active site.

It belongs to the GPI family.

The protein resides in the cytoplasm. It catalyses the reaction alpha-D-glucose 6-phosphate = beta-D-fructose 6-phosphate. It participates in carbohydrate biosynthesis; gluconeogenesis. It functions in the pathway carbohydrate degradation; glycolysis; D-glyceraldehyde 3-phosphate and glycerone phosphate from D-glucose: step 2/4. Catalyzes the reversible isomerization of glucose-6-phosphate to fructose-6-phosphate. The polypeptide is Glucose-6-phosphate isomerase (Brucella canis (strain ATCC 23365 / NCTC 10854 / RM-666)).